Here is a 211-residue protein sequence, read N- to C-terminus: Uridine kinase (211 aa).

ATP is bound at residue Gly12–Thr19.

The protein belongs to the uridine kinase family.

The protein resides in the cytoplasm. The catalysed reaction is uridine + ATP = UMP + ADP + H(+). It catalyses the reaction cytidine + ATP = CMP + ADP + H(+). The protein operates within pyrimidine metabolism; CTP biosynthesis via salvage pathway; CTP from cytidine: step 1/3. It functions in the pathway pyrimidine metabolism; UMP biosynthesis via salvage pathway; UMP from uridine: step 1/1. This chain is Uridine kinase, found in Halalkalibacterium halodurans (strain ATCC BAA-125 / DSM 18197 / FERM 7344 / JCM 9153 / C-125) (Bacillus halodurans).